The primary structure comprises 427 residues: Histidine--tRNA ligase (427 aa).

It belongs to the class-II aminoacyl-tRNA synthetase family. In terms of assembly, homodimer.

The protein localises to the cytoplasm. It carries out the reaction tRNA(His) + L-histidine + ATP = L-histidyl-tRNA(His) + AMP + diphosphate + H(+). This Deinococcus radiodurans (strain ATCC 13939 / DSM 20539 / JCM 16871 / CCUG 27074 / LMG 4051 / NBRC 15346 / NCIMB 9279 / VKM B-1422 / R1) protein is Histidine--tRNA ligase.